The chain runs to 440 residues: tRNA (guanine(37)-N(1))-methyltransferase (440 aa).

Residues His-217, 255–256 (DL), 283–284 (DG), and Asn-315 each bind S-adenosyl-L-methionine.

It belongs to the class I-like SAM-binding methyltransferase superfamily. TRM5/TYW2 family. In terms of assembly, monomer.

It is found in the mitochondrion matrix. It localises to the nucleus. Its subcellular location is the cytoplasm. It carries out the reaction guanosine(37) in tRNA + S-adenosyl-L-methionine = N(1)-methylguanosine(37) in tRNA + S-adenosyl-L-homocysteine + H(+). Functionally, specifically methylates the N1 position of guanosine-37 in various cytoplasmic and mitochondrial tRNAs. Methylation is not dependent on the nature of the nucleoside 5' of the target nucleoside. This is the first step in the biosynthesis of wybutosine (yW), a modified base adjacent to the anticodon of tRNAs and required for accurate decoding. This is tRNA (guanine(37)-N(1))-methyltransferase from Drosophila pseudoobscura pseudoobscura (Fruit fly).